The following is a 183-amino-acid chain: Bifunctional protein PyrR (183 aa).

The PRPP-binding motif lies at 102–114 (VVLVDDVLYTGRT).

The protein belongs to the purine/pyrimidine phosphoribosyltransferase family. PyrR subfamily. In terms of assembly, homodimer and homohexamer; in equilibrium.

The catalysed reaction is UMP + diphosphate = 5-phospho-alpha-D-ribose 1-diphosphate + uracil. Regulates transcriptional attenuation of the pyrimidine nucleotide (pyr) operon by binding in a uridine-dependent manner to specific sites on pyr mRNA. This disrupts an antiterminator hairpin in the RNA and favors formation of a downstream transcription terminator, leading to a reduced expression of downstream genes. Its function is as follows. Also displays a weak uracil phosphoribosyltransferase activity which is not physiologically significant. The protein is Bifunctional protein PyrR of Listeria monocytogenes serotype 4a (strain HCC23).